The following is a 172-amino-acid chain: 3-hydroxydecanoyl-[acyl-carrier-protein] dehydratase (172 aa).

The active site involves histidine 71.

It belongs to the thioester dehydratase family. FabA subfamily. In terms of assembly, homodimer.

The protein resides in the cytoplasm. The enzyme catalyses a (3R)-hydroxyacyl-[ACP] = a (2E)-enoyl-[ACP] + H2O. It catalyses the reaction (3R)-hydroxydecanoyl-[ACP] = (2E)-decenoyl-[ACP] + H2O. The catalysed reaction is (2E)-decenoyl-[ACP] = (3Z)-decenoyl-[ACP]. Its pathway is lipid metabolism; fatty acid biosynthesis. Its function is as follows. Necessary for the introduction of cis unsaturation into fatty acids. Catalyzes the dehydration of (3R)-3-hydroxydecanoyl-ACP to E-(2)-decenoyl-ACP and then its isomerization to Z-(3)-decenoyl-ACP. Can catalyze the dehydratase reaction for beta-hydroxyacyl-ACPs with saturated chain lengths up to 16:0, being most active on intermediate chain length. The sequence is that of 3-hydroxydecanoyl-[acyl-carrier-protein] dehydratase from Erwinia tasmaniensis (strain DSM 17950 / CFBP 7177 / CIP 109463 / NCPPB 4357 / Et1/99).